The following is a 363-amino-acid chain: tRNA N6-adenosine threonylcarbamoyltransferase (363 aa).

Fe cation contacts are provided by histidine 121 and histidine 125. Residues 143–147 (LASGG), aspartate 176, glycine 189, and asparagine 287 contribute to the substrate site. Aspartate 315 is a binding site for Fe cation.

It belongs to the KAE1 / TsaD family. Requires Fe(2+) as cofactor.

It is found in the cytoplasm. The enzyme catalyses L-threonylcarbamoyladenylate + adenosine(37) in tRNA = N(6)-L-threonylcarbamoyladenosine(37) in tRNA + AMP + H(+). Required for the formation of a threonylcarbamoyl group on adenosine at position 37 (t(6)A37) in tRNAs that read codons beginning with adenine. Is involved in the transfer of the threonylcarbamoyl moiety of threonylcarbamoyl-AMP (TC-AMP) to the N6 group of A37, together with TsaE and TsaB. TsaD likely plays a direct catalytic role in this reaction. The chain is tRNA N6-adenosine threonylcarbamoyltransferase from Rhodopseudomonas palustris (strain ATCC BAA-98 / CGA009).